Reading from the N-terminus, the 327-residue chain is Ribose 1,5-bisphosphate isomerase (327 aa).

Substrate contacts are provided by residues 25-28 and Arg-68; that span reads RGAA. Cys-133 (proton acceptor) is an active-site residue. Catalysis depends on Asp-202, which acts as the Proton donor. Substrate-binding positions include 212 to 213 and Lys-238; that span reads NK.

This sequence belongs to the eIF-2B alpha/beta/delta subunits family. R15P isomerase subfamily.

The catalysed reaction is alpha-D-ribose 1,5-bisphosphate = D-ribulose 1,5-bisphosphate. Isomerase involved in the non-carboxylating pentose bisphosphate pathway, a nucleoside degradation pathway present in some halophilic archaea. Catalyzes the isomerization of ribose 1,5-bisphosphate (R15P) to ribulose 1,5-bisphosphate (RuBP). The polypeptide is Ribose 1,5-bisphosphate isomerase (Haloterrigena turkmenica (strain ATCC 51198 / DSM 5511 / JCM 9101 / NCIMB 13204 / VKM B-1734 / 4k) (Halococcus turkmenicus)).